Here is a 133-residue protein sequence, read N- to C-terminus: Probable 4-amino-4-deoxy-L-arabinose-phosphoundecaprenol flippase subunit ArnF (133 aa).

Over 1-5 (MKTGY) the chain is Cytoplasmic. A helical membrane pass occupies residues 6–26 (LWAIASALLVTVAQLLLKIGM). The Periplasmic portion of the chain corresponds to 27 to 47 (SELPDLQLEKQWFDLHWLWAN). Residues 48–68 (IIPISVVFVGLIGYVLSMVCW) form a helical membrane-spanning segment. The EamA domain occupies 51 to 125 (ISVVFVGLIG…IMLGVWLISQ (75 aa)). Residues 69–80 (LLTLRTIPLNKA) lie on the Cytoplasmic side of the membrane. Residues 81–101 (YPLISLSYVFVYILAVVLPWF) form a helical membrane-spanning segment. Residues 102-103 (QE) are Periplasmic-facing. Residues 104 to 124 (TLSWSKTIGIIFIMLGVWLIS) form a helical membrane-spanning segment. Topologically, residues 125-133 (QKTEQTTSH) are cytoplasmic.

It belongs to the ArnF family. Heterodimer of ArnE and ArnF.

It is found in the cell inner membrane. It participates in bacterial outer membrane biogenesis; lipopolysaccharide biosynthesis. Functionally, translocates 4-amino-4-deoxy-L-arabinose-phosphoundecaprenol (alpha-L-Ara4N-phosphoundecaprenol) from the cytoplasmic to the periplasmic side of the inner membrane. This Proteus mirabilis (strain HI4320) protein is Probable 4-amino-4-deoxy-L-arabinose-phosphoundecaprenol flippase subunit ArnF.